The primary structure comprises 179 residues: Ribosome maturation factor RimM (179 aa).

Positions 98–170 (PDEFWDRRLR…RIVVSGIPGL (73 aa)) constitute a PRC barrel domain.

The protein belongs to the RimM family. In terms of assembly, binds ribosomal protein uS19.

Its subcellular location is the cytoplasm. In terms of biological role, an accessory protein needed during the final step in the assembly of 30S ribosomal subunit, possibly for assembly of the head region. Essential for efficient processing of 16S rRNA. May be needed both before and after RbfA during the maturation of 16S rRNA. It has affinity for free ribosomal 30S subunits but not for 70S ribosomes. This Cutibacterium acnes (strain DSM 16379 / KPA171202) (Propionibacterium acnes) protein is Ribosome maturation factor RimM.